A 697-amino-acid chain; its full sequence is uncharacterized protein (697 aa).

Helical transmembrane passes span 45 to 65 (LCAVTAIISVVVPFAAGLALL), 86 to 106 (TVAAGMIAFLIAGLGGFMGVV), 128 to 148 (VVVSSLIGGFVFGAAMVGMLA), 198 to 218 (VLLGYFNIGIMIVSLIGWWAL), and 280 to 300 (HLAIIGANGSGKTTLMLILAG). ABC transporter domains follow at residues 251–473 (VRLD…QPQH) and 477–696 (LELV…AGGM). ATP-binding positions include 285–292 (GANGSGKT) and 514–521 (GGNGSGKS). A helical transmembrane segment spans residues 522 to 542 (TLAWIMAGLTIPTTGACLLDG).

This sequence belongs to the ABC transporter superfamily.

It is found in the cell membrane. This is an uncharacterized protein from Mycobacterium tuberculosis (strain CDC 1551 / Oshkosh).